The following is a 1273-amino-acid chain: MTRSSLFKELADIAKERIMIIDGAMGTMIQREYMEEHDFRGEILKDHDKPLKGNNDLLSITRPDIIYKIHKLYLEAGADFIETNTFSGTTIAQADYHCEHLVHEINYQSALVARRACDDVGAATGIRRYVCGAIGPTNRTLSISPSVEKPDFRNVTFQELVKAYGDQARSLIQGGVDVLLVETVFDSANAKAALFAIRTLFEDEGVPEIPVFLSGTIVDMSGRTLSGQTGEAFLVSTKQGKPIAVGLNCALGAKDMRQFVQNMSLWSDTLILCYPNAGLPNALGGYDETPEEMAEVLREFAQDGLVNIIGGCCGTTPDHINAMYKAVQGISPRVPPADPHAGKMLLSGLEPSIVGPETNFVNIGERCNVAGSRRFCNLIKNENYDTAIDVARVQVDSGAQILDVNMDDGLLDGPYAMSKFLRLISSEPDVAKIPVCIDSSDFDVIIAGLESTQGKCVVNSISLKEGEEKFKERARIVKRYGAAVVVMAFDEEGQAAETERKFEICERSYRILTEEVGFNPNDIIFDANILTIATGMDEHANYGMYFIEATRMIRENLPGAHVSGGVSNISFSFRGMEAIREAMHSVFLFYAIKAGMDMGIVNAGALPVYEDIDKPLLQLLEDLLFNRDPEATEKLLVAAQEMKKDGKKADTKTDEWRNTSVEERLKFALVKGIDQFVVADTEEARQNTEKYPRPLNVIERPLMDGMAVVGELFGAGKMFLPQVIKSARVMKKAVAHLLPFMDAERQANIEKMGLDEDESPYQGTVVIATVKGDVHDIGKNIVAVVLGCNNFKVVDLGVMTPCENIIKAAIEEKADFIGLSGLITPSLDEMVHVAKEMNRVGLKIPLLIGGATTSKTHTAVKIAPRYPHPVVHCLDASKSVVVCSSLSDMTVRDAFLQDLNEDYEDVRTKMCLVSYLNHFFITEHYESLKDRRFVALGKTREKKFNIDWNKFSPVKPSFIGRREFQNFDFKELIPYIDWKPFFDVWQLRGKYPNRSYPKIFDDADVGGEAKRVFDDAQTWLKKLIDEKVLTANAVVSFLPAASEGDDIHVYDPETGNKLDTFYGLRQQSGREHDQSHFCLSDFIRPLKIGVPDDYLGLFACTAGLGAEEYCKVLEENHDDYASIMVKALADRLAEAYAEYLHKEVRVNLWGYSTNEQLTETDLLSIKYEGIRPACGYPSQPDHTEKRTLWKLLEAEKNGIVLTEHLAMLPAASVSGLYFANPQSQYFAVGKIDEDQVAFIYVRSKNVTDYAARKNVPKEEVERWLSPIIGYELD.

Residues 7-327 enclose the Hcy-binding domain; that stretch reads FKELADIAKE…DHINAMYKAV (321 aa). Residues C249, C312, and C313 each contribute to the Zn(2+) site. One can recognise a Pterin-binding domain in the interval 360–621; the sequence is FVNIGERCNV…IDKPLLQLLE (262 aa). Residues 652-749 enclose the B12-binding N-terminal domain; it reads KTDEWRNTSV…FMDAERQANI (98 aa). Residues E699, 772–776, H775, S820, T824, and A876 each bind methylcob(III)alamin; that span reads GDVHD. Residues 762–897 enclose the B12-binding domain; it reads QGTVVIATVK…DMTVRDAFLQ (136 aa). Residues 927-1273 form the AdoMet activation domain; sequence SLKDRRFVAL…LSPIIGYELD (347 aa). Residues D977, R1171, and 1225–1226 each bind S-adenosyl-L-methionine; that span reads YF.

Belongs to the vitamin-B12 dependent methionine synthase family. It depends on methylcob(III)alamin as a cofactor. Zn(2+) is required as a cofactor.

It catalyses the reaction (6S)-5-methyl-5,6,7,8-tetrahydrofolate + L-homocysteine = (6S)-5,6,7,8-tetrahydrofolate + L-methionine. The protein operates within amino-acid biosynthesis; L-methionine biosynthesis via de novo pathway; L-methionine from L-homocysteine (MetH route): step 1/1. Its function is as follows. Catalyzes the transfer of a methyl group from methyl-cobalamin to homocysteine, yielding enzyme-bound cob(I)alamin and methionine. Subsequently, remethylates the cofactor using methyltetrahydrofolate. The polypeptide is Probable methionine synthase (metr-1) (Caenorhabditis briggsae).